The sequence spans 256 residues: UPF0246 protein HCH_04801 (256 aa).

It belongs to the UPF0246 family.

The protein is UPF0246 protein HCH_04801 of Hahella chejuensis (strain KCTC 2396).